Here is a 379-residue protein sequence, read N- to C-terminus: Homoserine O-succinyltransferase (379 aa).

Positions 51–360 (NAVLICHALS…DAPQGHDAFL (310 aa)) constitute an AB hydrolase-1 domain. S157 (nucleophile) is an active-site residue. R227 is a substrate binding site. Active-site residues include D323 and H356. D357 provides a ligand contact to substrate.

It belongs to the AB hydrolase superfamily. MetX family. As to quaternary structure, homodimer.

It localises to the cytoplasm. The enzyme catalyses L-homoserine + succinyl-CoA = O-succinyl-L-homoserine + CoA. The protein operates within amino-acid biosynthesis; L-methionine biosynthesis via de novo pathway; O-succinyl-L-homoserine from L-homoserine: step 1/1. Its function is as follows. Transfers a succinyl group from succinyl-CoA to L-homoserine, forming succinyl-L-homoserine. This chain is Homoserine O-succinyltransferase, found in Pseudomonas aeruginosa (strain LESB58).